The following is a 1233-amino-acid chain: NACHT, LRR and PYD domains-containing protein 1b allele 1 (1233 aa).

The segment at 1–22 (MEESPPKQKSNTKVAQHEGQQD) is disordered. The region spanning 126–435 (QLVIIEGAAG…EFFAAISCIL (310 aa)) is the NACHT domain. Position 132 to 139 (132 to 139 (GAAGIGKS)) interacts with ATP. LRR repeat units lie at residues 627-647 (NLEG…QSLC) and 684-704 (SLTE…RMLC). A ZU5 region spans residues 850–983 (FWGPIGPVAT…GYTVLKNPSF (134 aa)). One can recognise an FIIND domain in the interval 850-1133 (FWGPIGPVAT…LRPALPRIAQ (284 aa)). A UPA region spans residues 984 to 1133 (SPMGVVLRII…LRPALPRIAQ (150 aa)). A CARD domain is found at 1143-1226 (HFMDQHREQL…HLVMDLLEKS (84 aa)).

Belongs to the NLRP family. As to quaternary structure, interacts with DPP9; leading to inhibit activation of the inflammasome. DPP9 acts via formation of a ternary complex, composed of a DPP9 homodimer, one full-length Nlrp1b protein, and one cleaved C-terminus of Nlrp1b (NACHT, LRR and PYD domains-containing protein 1b, C-terminus). Interacts with DPP8; leading to inhibit activation of the inflammasome, probably via formation of a ternary complex with DPP8. Interacts (via LRR repeats) with BCL2 and BCL2L1 (via the loop between motifs BH4 and BH3). Interacts with NOD2; this interaction may increase IL1B release. Interacts with EIF2AK2/PKR; this interaction requires EIF2AK2 activity, is accompanied by EIF2AK2 autophosphorylation and promotes inflammasome assembly in response to B.anthracis lethal toxin. Interacts with MEFV; this interaction targets Nlrp1b to degradation by autophagy, hence preventing excessive IL1B- and IL18-mediated inflammation. In terms of assembly, interacts with the C-terminal part of Nlrp1b (NACHT, LRR and PYD domains-containing protein 1b, C-terminus) in absence of pathogens and other damage-associated signals. Interacts with the N-terminal part of Nlrp1b (NACHT, LRR and PYD domains-containing protein 1b, N-terminus) in absence of pathogens and other damage-associated signals. Homomultimer; forms the Nlrp1b inflammasome polymeric complex, a filament composed of homopolymers of this form in response to pathogens and other damage-associated signals. The Nlrp1b inflammasome polymeric complex directly recruits pro-caspase-1 (proCASP1) independently of PYCARD/ASC. Interacts (via CARD domain) with CASP1 (via CARD domain); leading to CASP1 activation. Post-translationally, autocatalytically cleaved. Autocatalytic cleavage in FIIND region occurs constitutively, prior to activation signals, and is required for inflammasome activity (IL1B release), possibly by facilitating CASP1 binding. Both N- and C-terminal parts remain associated non-covalently. In terms of processing, ubiquitinated by UBR2, a component of the N-end rule pathway in response to pathogens and other damage-associated signals, leading to its degradation by the proteasome and subsequent release of the cleaved C-terminal part of the protein (NACHT, LRR and PYD domains-containing protein 1b, C-terminus), which polymerizes and forms the Nlrp1b inflammasome. (Microbial infection) Cleavage by B.anthracis lethal toxin (LT) endopeptidase promotes ubiquitination and degradation of the N-terminal part, releasing the cleaved C-terminal part of the protein (NACHT, LRR and PYD domains-containing protein 1b, C-terminus), which polymerizes and forms the Nlrp1b inflammasome. Post-translationally, (Microbial infection) Ubiquitinated by S.flexneri IpaH7.8, leading to its degradation by the proteasome and subsequent release of the cleaved C-terminal part of the protein (NACHT, LRR and PYD domains-containing protein 1b, C-terminus), which polymerizes and forms the Nlrp1b inflammasome. In terms of tissue distribution, widely expressed, including in macrophages.

It localises to the cytoplasm. Its subcellular location is the cytosol. It is found in the membrane. The protein resides in the inflammasome. Its activity is regulated as follows. Activated by cleavage by B.anthracis lethal toxin (LT) endopeptidase: cleavage by LT promotes ubiquitination and degradation of the N-terminal part, releasing the cleaved C-terminal part of the protein (NACHT, LRR and PYD domains-containing protein 1b, C-terminus), which polymerizes and forms the Nlrp1b inflammasome. Activated by S.flexneri IpaH7.8, an E3 ubiquitin ligase that mediates ubiquitination and degradation of the N-terminal part, releasing the cleaved C-terminal part of the protein, which polymerizes and forms the Nlrp1b inflammasome. Nlrp1b inflammasome is inhibited by DPP8 and DPP9, which sequester the C-terminal fragment of Nlrp1b (NACHT, LRR and PYD domains-containing protein 1b, C-terminus) in a ternary complex, thereby preventing Nlrp1b oligomerization and activation. Nlrp1b inflammasome is activated by Val-boroPro (Talabostat, PT-100), an inhibitor of dipeptidyl peptidases DPP8 and DPP9. Val-boroPro relieves inhibition of DPP8 and/or DPP9 by promoting disruption of the ternary complex, releasing its C-terminal part from autoinhibition. Activated by metabolic inhibitors, such as 2-deoxy-D-glucose and sodium azide, by nutrient deprivation and hypoxia, possibly due to a decrease in cytosolic ATP. Also activated by Toxoplasma gondii. Not activated by muramyl dipeptide, nor by full-length bacterial peptidoglycan. Contrary to its human ortholog, not activated by positive-strand RNA virus such as Semliki Forrest virus or long dsRNA. Acts as the sensor component of the Nlrp1b inflammasome, which mediates inflammasome activation in response to various pathogen-associated signals, leading to subsequent pyroptosis. Inflammasomes are supramolecular complexes that assemble in the cytosol in response to pathogens and other damage-associated signals and play critical roles in innate immunity and inflammation. Acts as a recognition receptor (PRR): recognizes specific pathogens and other damage-associated signals, such as B.anthracis lethal toxin (LT) or Val-boroPro inhibitor, and mediates the formation of the inflammasome polymeric complex. In response to pathogen-associated signals, the N-terminal part of Nlrp1b is degraded by the proteasome, releasing the cleaved C-terminal part of the protein (NACHT, LRR and PYD domains-containing protein 1b, C-terminus), which polymerizes to initiate the formation of the inflammasome complex: the inflammasome directly recruits pro-caspase-1 (proCASP1) independently of PYCARD/ASC and promotes caspase-1 (CASP1) activation, which subsequently cleaves and activates inflammatory cytokines IL1B and IL18 and gasdermin-D (GSDMD), leading to pyroptosis. In the absence of GSDMD expression, the Nlrp1b inflammasome is able to recruit and activate CASP8, leading to activation of gasdermin-E (GSDME). Activation of Nlrp1b inflammasome is also required for HMGB1 secretion; the active cytokines and HMGB1 stimulate inflammatory responses. Primary mediator of macrophage susceptibility to B.anthracis LT: in response to B.anthracis infection, macrophages and dendritic cells release IL1B and undergo pyroptosis. This early inflammatory response to the toxin increases resistance to infection by B.anthracis spores. Its function is as follows. Constitutes the precursor of the Nlrp1b inflammasome, which mediates autoproteolytic processing within the FIIND domain to generate the N-terminal and C-terminal parts, which are associated non-covalently in absence of pathogens and other damage-associated signals. In terms of biological role, regulatory part that prevents formation of the Nlrp1b inflammasome: in absence of pathogens and other damage-associated signals, interacts with the C-terminal part of Nlrp1b (NACHT, LRR and PYD domains-containing protein 1b, C-terminus), preventing activation of the Nlrp1b inflammasome. In response to pathogen-associated signals, this part is ubiquitinated by the N-end rule pathway and degraded by the proteasome, releasing the cleaved C-terminal part of the protein, which polymerizes and forms the Nlrp1b inflammasome. Functionally, constitutes the active part of the Nlrp1b inflammasome. In absence of pathogens and other damage-associated signals, interacts with the N-terminal part of Nlrp1b (NACHT, LRR and PYD domains-containing protein 1b, N-terminus), preventing activation of the Nlrp1b inflammasome. In response to pathogen-associated signals, the N-terminal part of Nlrp1b is degraded by the proteasome, releasing this form, which polymerizes to form the Nlrp1b inflammasome complex: the Nlrp1b inflammasome complex then directly recruits pro-caspase-1 (proCASP1) and promotes caspase-1 (CASP1) activation, leading to gasdermin-D (GSDMD) cleavage and subsequent pyroptosis. The chain is NACHT, LRR and PYD domains-containing protein 1b allele 1 from Mus musculus (Mouse).